We begin with the raw amino-acid sequence, 511 residues long: Sphingosine-1-phosphate transporter MFSD2B (511 aa).

Transmembrane regions (helical) follow at residues 108 to 128, 136 to 156, 236 to 256, 280 to 300, 323 to 343, 357 to 377, 379 to 399, 415 to 435, and 462 to 482; these read MPWMLGCTPFLVVSYFLLWFV, VLWYLAFFSCFQALSTAYHVP, IAAGIIGCLYLLCISVLFLGV, TMQFGPYLNLISSFLLISAAV, NLVLTILIAAVLSIPFWQWFL, LMIPFSIMLVTISSLVVAYVV, VASGLSIAASLLLPWSMLPDV, AIFYSSFVFFTKLSAGIALGI, and LLIGAAPALMIIIGLTILAFY.

It belongs to the major facilitator superfamily.

The protein localises to the cell membrane. The enzyme catalyses sphing-4-enine 1-phosphate(in) = sphing-4-enine 1-phosphate(out). It catalyses the reaction sphinganine 1-phosphate(in) = sphinganine 1-phosphate(out). It carries out the reaction sphinga-4E,14Z-dienine-1-phosphate(in) = sphinga-4E,14Z-dienine-1-phosphate(out). Functionally, lipid transporter that specifically mediates export of sphingosine-1-phosphate in red blood cells and platelets. Sphingosine-1-phosphate is a signaling sphingolipid and its export from red blood cells into in the plasma is required for red blood cell morphology. Sphingosine-1-phosphate export from platelets is required for platelet aggregation and thrombus formation. In addition to export, also able to mediate S1P import. The protein is Sphingosine-1-phosphate transporter MFSD2B of Xenopus tropicalis (Western clawed frog).